A 339-amino-acid polypeptide reads, in one-letter code: Putative phosphate acyltransferase (339 aa).

It belongs to the PlsX family. As to quaternary structure, homodimer. Probably interacts with PlsY.

The protein resides in the cytoplasm. It carries out the reaction a fatty acyl-[ACP] + phosphate = an acyl phosphate + holo-[ACP]. It functions in the pathway lipid metabolism; phospholipid metabolism. In terms of biological role, catalyzes the reversible formation of acyl-phosphate (acyl-PO(4)) from acyl-[acyl-carrier-protein] (acyl-ACP). This enzyme utilizes acyl-ACP as fatty acyl donor, but not acyl-CoA. The sequence is that of Putative phosphate acyltransferase from Clostridium perfringens (strain 13 / Type A).